Consider the following 325-residue polypeptide: Beta-ketoacyl-[acyl-carrier-protein] synthase III (325 aa).

Active-site residues include Cys-112 and His-250. The interval Gln-251 to Arg-255 is ACP-binding. Asn-280 is a catalytic residue.

The protein belongs to the thiolase-like superfamily. FabH family. Homodimer.

The protein resides in the cytoplasm. The enzyme catalyses malonyl-[ACP] + acetyl-CoA + H(+) = 3-oxobutanoyl-[ACP] + CO2 + CoA. It participates in lipid metabolism; fatty acid biosynthesis. Functionally, catalyzes the condensation reaction of fatty acid synthesis by the addition to an acyl acceptor of two carbons from malonyl-ACP. Catalyzes the first condensation reaction which initiates fatty acid synthesis and may therefore play a role in governing the total rate of fatty acid production. Possesses both acetoacetyl-ACP synthase and acetyl transacylase activities. Its substrate specificity determines the biosynthesis of branched-chain and/or straight-chain of fatty acids. This chain is Beta-ketoacyl-[acyl-carrier-protein] synthase III, found in Lactococcus lactis subsp. cremoris (strain MG1363).